We begin with the raw amino-acid sequence, 471 residues long: MLSILGWFWAFVSAFVLRYLRTIVNCISNWTYRPIPIPDNPTYGPQDVTIILPTIAQGGEELEGTLRTCLRTEPYEIILVTIDANVKNLTLLAKKINSKKIRVLSVREANKRRQMCRAIPEVSTRITIFVDDDVIWPVKLLPWILAPFENPQMGGVGTSQRRVRPEKMNAWVFLNMGYLERRNWDCSACLHIDGGLPCLSGRTAAYRTSILQDDAFTHGFTNETWRTMQLNADDDNFITRWLYSHNWKIGMQYHKEAEVLTTLEAGPKYLSQCLRWVRSNWRSNIKSMFVERHYWYTQLWTTYSCLQTTITAWALPWDAFLFYSLHKASTDWSDDSRKMAFTLLFLWIFGFTKNVKLWGHYFRYPVDVIYIPVHIAFGYFHGLIKFWGLVTLSETTWGSRDGADSSELNRIRMMPLPPYGSTTPDGRKSETFEYMQEMPLIDQLPAYDTHDRHPPLSNMTSTITTTTPFHD.

A helical transmembrane segment spans residues 4–24 (ILGWFWAFVSAFVLRYLRTIV). Residues N29, N88, and N222 are each glycosylated (N-linked (GlcNAc...) asparagine). The next 3 helical transmembrane spans lie at 305 to 325 (CLQT…FYSL), 339 to 359 (MAFT…KLWG), and 368 to 388 (VIYI…KFWG). Residue N458 is glycosylated (N-linked (GlcNAc...) asparagine).

Belongs to the GT2 glycosyltransferase family.

The protein resides in the cell membrane. Its function is as follows. Glycosyltransferase involved in the maintenance of the outermost surface of the fungal cell wall. Likely functions in the synthesis of a currently unknown, potentially minor but widespread, extracellular or outer cell wall polysaccharide which plays a key role in facilitating many interactions between plants and fungi by enabling hyphal growth on solid matrices. The sequence is that of Type 2 glycosyltransferase from Zymoseptoria tritici (strain CBS 115943 / IPO323) (Speckled leaf blotch fungus).